Reading from the N-terminus, the 106-residue chain is Large ribosomal subunit protein eL42A (106 aa).

An N6-methyllysine; by RKM3 modification is found at lysine 40. Lysine 55 is subject to N6-methyllysine; by RKM4.

It belongs to the eukaryotic ribosomal protein eL42 family. As to quaternary structure, component of the large ribosomal subunit (LSU). Mature yeast ribosomes consist of a small (40S) and a large (60S) subunit. The 40S small subunit contains 1 molecule of ribosomal RNA (18S rRNA) and 33 different proteins (encoded by 57 genes). The large 60S subunit contains 3 rRNA molecules (25S, 5.8S and 5S rRNA) and 46 different proteins (encoded by 81 genes). Post-translationally, in wild-type cells, 78% of L42 is monomethylated at both Lys-40 and Lys-55, and 22% are a mixture of species with either residue monomethylated.

The protein localises to the cytoplasm. Its function is as follows. Component of the ribosome, a large ribonucleoprotein complex responsible for the synthesis of proteins in the cell. The small ribosomal subunit (SSU) binds messenger RNAs (mRNAs) and translates the encoded message by selecting cognate aminoacyl-transfer RNA (tRNA) molecules. The large subunit (LSU) contains the ribosomal catalytic site termed the peptidyl transferase center (PTC), which catalyzes the formation of peptide bonds, thereby polymerizing the amino acids delivered by tRNAs into a polypeptide chain. The nascent polypeptides leave the ribosome through a tunnel in the LSU and interact with protein factors that function in enzymatic processing, targeting, and the membrane insertion of nascent chains at the exit of the ribosomal tunnel. The chain is Large ribosomal subunit protein eL42A from Saccharomyces cerevisiae (strain ATCC 204508 / S288c) (Baker's yeast).